A 139-amino-acid polypeptide reads, in one-letter code: MADLVTVVKKTEEEWRAVLSPEQFRILRQKGTETPGTEEYDKFFEEGIFSCIGCKTPLYKSTTKFDAGCGWPAFFEGLPGAINRAPDPDGRRTEITCAVCDGHLGHVHKGEGYSTPTDERLCVNSVSINFNPAKPSSIT.

At A2 the chain carries N-acetylalanine. Residues 12–133 enclose the MsrB domain; the sequence is EEEWRAVLSP…NSVSINFNPA (122 aa). Zn(2+) contacts are provided by C51, C54, C97, and C100. Cysteines 69 and 122 form a disulfide. The active-site Nucleophile is C122.

The protein belongs to the MsrB Met sulfoxide reductase family. It depends on Zn(2+) as a cofactor.

The protein resides in the cytoplasm. It localises to the cytosol. The enzyme catalyses L-methionyl-[protein] + [thioredoxin]-disulfide + H2O = L-methionyl-(R)-S-oxide-[protein] + [thioredoxin]-dithiol. Its function is as follows. Catalyzes the reduction of methionine sulfoxide (MetSO) to methionine in proteins. Plays a protective role against oxidative stress by restoring activity to proteins that have been inactivated by methionine oxidation. MSRB family specifically reduces the MetSO R-enantiomer. This chain is Peptide methionine sulfoxide reductase B4 (MSRB4), found in Arabidopsis thaliana (Mouse-ear cress).